The chain runs to 713 residues: Nucleolin (713 aa).

Residues 1–309 (MVKLAKAGKT…QKIEGSEPTT (309 aa)) form a disordered region. Residues Lys-9, Lys-15, and Lys-16 each carry the N6-acetyllysine modification. Acidic residues predominate over residues 24–46 (VEEDSEDEEMSEDEDDSSGEEEV). Ser-28, Ser-34, Ser-40, and Ser-41 each carry phosphoserine. Low complexity predominate over residues 56–111 (ATTTPAKKVVVSQTKKAAVPTPAKKAAVTPGKKAAATPAKKAVTPAKVVPTPGKKG). Repeat unit 1 spans residues 58 to 65 (TTPAKKVV). The interval 58–135 (TTPAKKVVVS…GAVTPAKGAK (78 aa)) is 8 X 8 AA tandem repeats of X-T-P-X-K-K-X-X. Ser-67 is modified (phosphoserine). 4 positions are modified to phosphothreonine: Thr-69, Thr-76, Thr-84, and Thr-92. 3 consecutive repeat copies span residues 75–82 (PTPAKKAA), 83–90 (VTPGKKAA), and 91–98 (ATPAKKAV). Position 96 is an N6-acetyllysine (Lys-96). Thr-99 is modified (phosphothreonine). Residues 99-104 (TPAKVV) form a 5; truncated repeat. N6-acetyllysine is present on Lys-102. Repeat 6 spans residues 105–112 (PTPGKKGA). Thr-106 carries the post-translational modification Phosphothreonine. An N6-acetyllysine mark is found at Lys-109 and Lys-116. A run of 2 repeats spans residues 120–127 (PTPGKKGA) and 128–135 (VTPAKGAK). Thr-121 is subject to Phosphothreonine. Lys-124 carries the N6-acetyllysine modification. Phosphoserine is present on residues Ser-145 and Ser-157. The segment covering 145-168 (SDEDEDEEDEDDSDEDEDEEDEFE) has biased composition (acidic residues). A compositionally biased stretch (low complexity) spans 169–186 (PPVVKGVKPAKAAPAAPA). Phosphoserine occurs at positions 187 and 213. The span at 187-218 (SEDEDEEDDDDEDDDDDDEEEEEEDDSEEEVM) shows a compositional bias: acidic residues. A Phosphothreonine modification is found at Thr-221. The span at 242–275 (EEEEDDEDDEDEEEDEDEEDEEDDEDEDEEEEEE) shows a compositional bias: acidic residues. The span at 288 to 304 (MTKQKEAPEAKKQKIEG) shows a compositional bias: basic and acidic residues. Lys-301 is covalently cross-linked (Glycyl lysine isopeptide (Lys-Gly) (interchain with G-Cter in SUMO1); alternate). A Glycyl lysine isopeptide (Lys-Gly) (interchain with G-Cter in SUMO2); alternate cross-link involves residue Lys-301. Position 305 is a phosphoserine (Ser-305). RRM domains lie at 311 to 387 (FNLF…KPKG) and 397 to 470 (RTLL…YTGE). The residue at position 322 (Lys-322) is an N6-acetyllysine. Residue Lys-328 forms a Glycyl lysine isopeptide (Lys-Gly) (interchain with G-Cter in SUMO1); alternate linkage. Residue Lys-328 forms a Glycyl lysine isopeptide (Lys-Gly) (interchain with G-Cter in SUMO2); alternate linkage. At Lys-352 the chain carries N6-acetyllysine. Ser-360 bears the Phosphoserine mark. Thr-371 is modified (phosphothreonine). Lys-374 is covalently cross-linked (Glycyl lysine isopeptide (Lys-Gly) (interchain with G-Cter in SUMO2)). Residue Lys-381 forms a Glycyl lysine isopeptide (Lys-Gly) (interchain with G-Cter in SUMO2); alternate linkage. N6-acetyllysine; alternate is present on Lys-381. Lys-402 is subject to N6-acetyllysine. A Phosphoserine modification is found at Ser-405. A Phosphothreonine modification is found at Thr-409. N6-acetyllysine is present on Lys-448. A phosphoserine mark is found at Ser-462 and Ser-464. An N6-acetyllysine mark is found at Lys-471 and Lys-480. One can recognise an RRM 3 domain in the interval 489-563 (KTLVLSNLSY…RTIRLELQGP (75 aa)). A Glycyl lysine isopeptide (Lys-Gly) (interchain with G-Cter in SUMO2); alternate cross-link involves residue Lys-516. Lys-516 is modified (N6-acetyllysine; alternate). At Lys-524 the chain carries N6-acetyllysine. Position 566 is a phosphoserine (Ser-566). An N6-acetyllysine modification is found at Lys-575. The RRM 4 domain maps to 575-650 (KTLFVKGLSE…NKVTLDWAKP (76 aa)). Lys-580 participates in a covalent cross-link: Glycyl lysine isopeptide (Lys-Gly) (interchain with G-Cter in SUMO2); alternate. N6-acetyllysine; alternate is present on Lys-580. The residue at position 583 (Ser-583) is a Phosphoserine. Lys-592 is covalently cross-linked (Glycyl lysine isopeptide (Lys-Gly) (interchain with G-Cter in SUMO1); alternate). Residue Lys-592 forms a Glycyl lysine isopeptide (Lys-Gly) (interchain with G-Cter in SUMO2); alternate linkage. Phosphoserine is present on residues Ser-594 and Ser-622. Lys-627 is covalently cross-linked (Glycyl lysine isopeptide (Lys-Gly) (interchain with G-Cter in SUMO2)). The segment at 645-713 (LDWAKPKGEG…KPQGKKTKFE (69 aa)) is disordered. The residue at position 649 (Lys-649) is an N6-acetyllysine. Gly residues predominate over residues 653–702 (EGGFGGRGGGRGGFGGRGGGRGGRGGFGGRGRGGFGGRGGFRGGRGGGGD). Residues Arg-659, Arg-663, Arg-669, Arg-673, Arg-676, Arg-682, Arg-684, Arg-690, and Arg-694 each carry the asymmetric dimethylarginine modification. Arg-697 bears the Asymmetric dimethylarginine; alternate mark. The residue at position 697 (Arg-697) is an Omega-N-methylarginine; alternate.

As to quaternary structure, identified in a IGF2BP1-dependent mRNP granule complex containing untranslated mRNAs. Component of the SWAP complex that consists of NPM1, NCL/nucleolin, PARP1 and SWAP70. Component of a complex which is at least composed of HTATSF1/Tat-SF1, the P-TEFb complex components CDK9 and CCNT1, RNA polymerase II, SUPT5H, and NCL/nucleolin. Interacts with AICDA. Interacts with APTX. Interacts with C1QBP. Interacts with ERBB4. Interacts (via C-terminus) with FMR1 isoform 6 (via N-terminus). Interacts with GZF1; this interaction is important for nucleolar localization of GZF1. Interacts with NSUN2. Interacts with NVL. Interacts (via N-terminus domain) with SETX. Interacts (via RRM1 and C-terminal RRM4/Arg/Gly-rich domains) with TERT; the interaction is important for nucleolar localization of TERT. Interacts with WDR46. Interacts with ZFP36. Interacts with LRRC34. Interacts with RRP1B. Interacts with HNRNPU; this interaction occurs during mitosis. Interacts with RIOK1; RIOK1 recruits NCL to PRMT5 for symmetrically methylation. Interacts with ZBTB7B. Interacts with MDK; this interaction promotes NCL clustering and lateral movements of this complex into lipid rafts leading to MDK internalization. Interacts with HDGF. Interacts with ALKBH2. Interacts with IGFBP5; this interaction is necessary for IGFBP5 localization to the nucleus. Interacts with DDX24 (when ubiquitinated); this interaction may be important during ribosome biogenesis. In terms of processing, some glutamate residues are glycylated by TTLL8. This modification occurs exclusively on glutamate residues and results in a glycine chain on the gamma-carboxyl group. Symmetrically methylated by PRMT5.

The protein localises to the nucleus. Its subcellular location is the nucleolus. It is found in the cytoplasm. In terms of biological role, nucleolin is the major nucleolar protein of growing eukaryotic cells. It is found associated with intranucleolar chromatin and pre-ribosomal particles. It induces chromatin decondensation by binding to histone H1. It is thought to play a role in pre-rRNA transcription and ribosome assembly. May play a role in the process of transcriptional elongation. Binds RNA oligonucleotides with 5'-UUAGGG-3' repeats more tightly than the telomeric single-stranded DNA 5'-TTAGGG-3' repeats. The chain is Nucleolin (Ncl) from Rattus norvegicus (Rat).